We begin with the raw amino-acid sequence, 89 residues long: Small ribosomal subunit protein uS15 (89 aa).

This sequence belongs to the universal ribosomal protein uS15 family. Part of the 30S ribosomal subunit. Forms a bridge to the 50S subunit in the 70S ribosome, contacting the 23S rRNA.

In terms of biological role, one of the primary rRNA binding proteins, it binds directly to 16S rRNA where it helps nucleate assembly of the platform of the 30S subunit by binding and bridging several RNA helices of the 16S rRNA. Functionally, forms an intersubunit bridge (bridge B4) with the 23S rRNA of the 50S subunit in the ribosome. The polypeptide is Small ribosomal subunit protein uS15 (Roseobacter denitrificans (strain ATCC 33942 / OCh 114) (Erythrobacter sp. (strain OCh 114))).